A 921-amino-acid polypeptide reads, in one-letter code: MQRHKELYKEQSLVLSPRNHCQENRDRLQAARAKKREDCFYQNRIISVSPTPVKIKQLAAAQAALTQENVAPKLESPERLDTKPAELLKESNPKVSRQKLYLQRYMEWKIAKTKEHKQQDQKRRGAAINVPTVKQSKALPKSQTFRVPDNLASAKQKEAAPMFQPPKRCSLYMIANPTGKGKAAEPIKPSIPKPTSAAAPPSSNTVAASSALARHKSAASATKIVPAIRQNNNPVALARQKAAARPIPNTTKQTTSVRQPGIEAKKITTTIPRPTPATVTKAKTPGIRQQPPVVSTKPRLPEPPAPRTARLPNVLSKPFEKPLGNKAPVTRRANVVKPQPIRGGGGAAAKFKDTAGATSKAASHSIRMKATKIKSQYTRLQDNVRKLPQLKAELLHAATLDIPPLTPLDDIHNPFIDQATSTQCKSNNSSGHLLEAFGDTILLSPVAPVKAEGESSVKRQLLPEGKKEASGPVAKKKFDFTRYSVANSPAEDSLILDPQQTTVKEDTGDSTLVPEGTKTPPRRESNGMPNYLSPFVSVSRGKVNSRCEKEKRNSFYLSNEESPLEVRRAIESVLYFRLQLENEITRLQALCAEWEAYSKENEARLQETGGIDMINVTIGQTRLLTTKKMMQFSGLIDRCEAGATGKNSQPNDGSEDSKPVQAEDLEGWWDMLRLQSENVDKRFDNLKRWKANDWLDPDAVAEEPKQPKPKPKISRNMKIKSKAKPSSNLQQFLRKAHANMKKTKVEEPTLEDGLPATSSRHSSPRVIVVRNRRSFSPARTVLRMSTGEGRQSIAPNALLKSAILAAAEQNAAKTPPPKPRTSILKTPGTTKRQNRGVLFSAKKSVRRFQFTYEEGNISNDETVGADKLEDCEEDMSLEASTESGSLEQNPGRDSNQENEATPRTYTLRNRRVNLRPSSEFM.

Serine 49 carries the phosphoserine modification. At threonine 51 the chain carries Phosphothreonine. 2 positions are modified to phosphoserine: serine 76 and serine 170. Tyrosine 172 carries the post-translational modification Phosphotyrosine. Disordered regions lie at residues 179–208 and 273–325; these read GKGKAAEPIKPSIPKPTSAAAPPSSNTVAA and RPTP…PLGN. Composition is skewed to low complexity over residues 193–208 and 273–285; these read KPTSAAAPPSSNTVAA and RPTPATVTKAKTP. Residue serine 444 is modified to Phosphoserine. Positions 500–531 are disordered; it reads QTTVKEDTGDSTLVPEGTKTPPRRESNGMPNY. The residue at position 519 (threonine 519) is a Phosphothreonine. At serine 554 the chain carries Phosphoserine. Disordered regions lie at residues 641–660 and 743–763; these read AGATGKNSQPNDGSEDSKPV and TKVEEPTLEDGLPATSSRHSS. Serine 785 and serine 792 each carry phosphoserine. 2 disordered regions span residues 809-833 and 861-921; these read QNAAKTPPPKPRTSILKTPGTTKRQ and ETVG…SEFM. Threonine 826 bears the Phosphothreonine mark. The segment covering 878-907 has biased composition (polar residues); it reads EASTESGSLEQNPGRDSNQENEATPRTYTL.

Belongs to the SAPAP family. In terms of tissue distribution, expressed in the central nervous system and at different stages of gametogenesis. In embryos, it is expressed in central nervous system and brain. In testis, it is strongly expressed in pre-meiotic germ cells, but is not found in somatic or post-meiotic cells.

It localises to the cell membrane. The protein resides in the nucleus. The protein localises to the nucleoplasm. It is found in the cytoplasm. Its subcellular location is the cytoskeleton. It localises to the spindle. In terms of biological role, cell cycle regulator. This chain is Guanylate kinase-associated protein mars (mars), found in Drosophila melanogaster (Fruit fly).